The primary structure comprises 252 residues: Type II secretion system protein N (252 aa).

Over methionine 1–lysine 4 the chain is Cytoplasmic. A helical membrane pass occupies residues valine 5–alanine 25. The Periplasmic portion of the chain corresponds to threonine 26 to isoleucine 252.

Belongs to the GSP N family.

It is found in the cell inner membrane. Involved in a type II secretion system (T2SS, formerly general secretion pathway, GSP) for the export of proteins. This is Type II secretion system protein N (exeN) from Aeromonas hydrophila.